We begin with the raw amino-acid sequence, 103 residues long: Small ribosomal subunit protein uS10 (103 aa).

Belongs to the universal ribosomal protein uS10 family. Part of the 30S ribosomal subunit.

In terms of biological role, involved in the binding of tRNA to the ribosomes. This chain is Small ribosomal subunit protein uS10, found in Chromohalobacter salexigens (strain ATCC BAA-138 / DSM 3043 / CIP 106854 / NCIMB 13768 / 1H11).